The following is a 285-amino-acid chain: Golgi phosphoprotein 3-like (285 aa).

Positions M1–G39 are disordered. Over residues R10 to S23 the composition is skewed to basic and acidic residues. Residues W67 and R76 each coordinate a 1,2-diacyl-sn-glycero-3-phospho-(1D-myo-inositol 4-phosphate). S112 carries the phosphoserine modification. 2 residues coordinate a 1,2-diacyl-sn-glycero-3-phospho-(1D-myo-inositol 4-phosphate): R157 and R160. The interval E176–T187 is beta-hairpin required for oligomerization.

The protein belongs to the GOLPH3/VPS74 family. Homooligomer. Does not interact MYO18; differs from GOLPH3 by its inability to interact with MYO18. May interact with ARF1.

Its subcellular location is the golgi apparatus. It is found in the golgi stack membrane. It localises to the trans-Golgi network membrane. Functionally, phosphatidylinositol-4-phosphate-binding protein that may antagonize the action of GOLPH3 which is required for the process of vesicle budding at the Golgi and anterograde transport to the plasma membrane. This chain is Golgi phosphoprotein 3-like (GOLPH3L), found in Bos taurus (Bovine).